The primary structure comprises 77 residues: Exodeoxyribonuclease 7 small subunit (77 aa).

This sequence belongs to the XseB family. In terms of assembly, heterooligomer composed of large and small subunits.

The protein resides in the cytoplasm. The enzyme catalyses Exonucleolytic cleavage in either 5'- to 3'- or 3'- to 5'-direction to yield nucleoside 5'-phosphates.. In terms of biological role, bidirectionally degrades single-stranded DNA into large acid-insoluble oligonucleotides, which are then degraded further into small acid-soluble oligonucleotides. This chain is Exodeoxyribonuclease 7 small subunit, found in Alkaliphilus oremlandii (strain OhILAs) (Clostridium oremlandii (strain OhILAs)).